Reading from the N-terminus, the 360-residue chain is Deoxyhypusine hydroxylase (360 aa).

3 HEAT-like PBS-type repeats span residues 56-82 (LKHE…ILQD), 89-115 (VRHE…YRSD), and 213-245 (ERYR…GLQD). Residues His58, Glu59, His91, and Glu92 each coordinate Fe cation. 4 residues coordinate Fe cation: His252, Glu253, His285, and Glu286.

This sequence belongs to the deoxyhypusine hydroxylase family. It depends on Fe(2+) as a cofactor.

The protein resides in the cytoplasm. The protein localises to the nucleus. The enzyme catalyses [eIF5A protein]-deoxyhypusine + AH2 + O2 = [eIF5A protein]-hypusine + A + H2O. The protein operates within protein modification; eIF5A hypusination. In terms of biological role, catalyzes the hydroxylation of the N(6)-(4-aminobutyl)-L-lysine intermediate to form hypusine, an essential post-translational modification only found in mature eIF-5A factor. The chain is Deoxyhypusine hydroxylase from Mycosarcoma maydis (Corn smut fungus).